A 357-amino-acid chain; its full sequence is Non-structural protein NS2 (357 aa).

2 disordered regions span residues 163–199 (NERESAPRLQVQSVAPREESRWMDDDEAKVDEEAREM) and 228–267 (LDEKDEEDGDEREDEERVKTLSDDDEQGEDASDDEHPKTH). Acidic residues-rich tracts occupy residues 230–241 (EKDEEDGDERED) and 250–260 (DDDEQGEDASD).

Belongs to the orbivirus non-structural protein NS2 family.

Single-stranded RNA-binding protein. The protein is Non-structural protein NS2 (Segment-8) of Antilocapra americana (Pronghorn).